The primary structure comprises 152 residues: 17.1 kDa class II heat shock protein (152 aa).

One can recognise a sHSP domain in the interval 36–152 (DAKAMAATPA…KPKTIQVKVA (117 aa)).

It belongs to the small heat shock protein (HSP20) family.

It localises to the cytoplasm. The polypeptide is 17.1 kDa class II heat shock protein (HSP17.7) (Pisum sativum (Garden pea)).